Consider the following 341-residue polypeptide: Ketol-acid reductoisomerase (NADP(+)) (341 aa).

Residues 2 to 181 enclose the KARI N-terminal Rossmann domain; the sequence is AKVYYNGDVN…GAARAGVLET (180 aa). NADP(+) contacts are provided by residues 25–28, Arg-48, Ser-52, and 82–85; these read YGSQ and DEHQ. The active site involves His-107. Position 133 (Gly-133) interacts with NADP(+). The region spanning 182–327 is the KARI C-terminal knotted domain; sequence TFKEETETDL…RELREMMPFV (146 aa). Mg(2+)-binding residues include Asp-190, Glu-194, Glu-226, and Glu-230. Ser-251 is a substrate binding site.

Belongs to the ketol-acid reductoisomerase family. Mg(2+) serves as cofactor.

It carries out the reaction (2R)-2,3-dihydroxy-3-methylbutanoate + NADP(+) = (2S)-2-acetolactate + NADPH + H(+). The enzyme catalyses (2R,3R)-2,3-dihydroxy-3-methylpentanoate + NADP(+) = (S)-2-ethyl-2-hydroxy-3-oxobutanoate + NADPH + H(+). The protein operates within amino-acid biosynthesis; L-isoleucine biosynthesis; L-isoleucine from 2-oxobutanoate: step 2/4. It participates in amino-acid biosynthesis; L-valine biosynthesis; L-valine from pyruvate: step 2/4. Its function is as follows. Involved in the biosynthesis of branched-chain amino acids (BCAA). Catalyzes an alkyl-migration followed by a ketol-acid reduction of (S)-2-acetolactate (S2AL) to yield (R)-2,3-dihydroxy-isovalerate. In the isomerase reaction, S2AL is rearranged via a Mg-dependent methyl migration to produce 3-hydroxy-3-methyl-2-ketobutyrate (HMKB). In the reductase reaction, this 2-ketoacid undergoes a metal-dependent reduction by NADPH to yield (R)-2,3-dihydroxy-isovalerate. The sequence is that of Ketol-acid reductoisomerase (NADP(+)) from Shouchella clausii (strain KSM-K16) (Alkalihalobacillus clausii).